A 64-amino-acid chain; its full sequence is Disintegrin CV-11-beta (64 aa).

The 64-residue stretch at 1–64 (NSAHPCCDPV…SDCPRNPWKD (64 aa)) folds into the Disintegrin domain. Intrachain disulfides connect cysteine 6–cysteine 29, cysteine 20–cysteine 26, cysteine 25–cysteine 50, and cysteine 38–cysteine 57. A Cell attachment site motif is present at residues 42-44 (RGD).

Belongs to the disintegrin family. Dimeric disintegrin subfamily. Heterodimer with subunit alpha; disulfide-linked. Expressed by the venom gland.

Its subcellular location is the secreted. Functionally, inhibits ADP-induced human platelet aggregation. Antagonist of alpha-IIb/beta-3 (ITGA2B/ITGB3). The polypeptide is Disintegrin CV-11-beta (Cerastes vipera (Sahara sand viper)).